The chain runs to 393 residues: Glutamyl-tRNA reductase (393 aa).

Residues 47-50 (TCGR), Ser98, 103-105 (ETD), and Gln109 contribute to the substrate site. Residue Cys48 is the Nucleophile of the active site. 177–182 (GAGAVG) is an NADP(+) binding site.

The protein belongs to the glutamyl-tRNA reductase family. Homodimer.

It carries out the reaction (S)-4-amino-5-oxopentanoate + tRNA(Glu) + NADP(+) = L-glutamyl-tRNA(Glu) + NADPH + H(+). It participates in porphyrin-containing compound metabolism; protoporphyrin-IX biosynthesis; 5-aminolevulinate from L-glutamyl-tRNA(Glu): step 1/2. Catalyzes the NADPH-dependent reduction of glutamyl-tRNA(Glu) to glutamate 1-semialdehyde (GSA). This is Glutamyl-tRNA reductase from Pyrobaculum islandicum (strain DSM 4184 / JCM 9189 / GEO3).